The primary structure comprises 417 residues: Lissencephaly-1 homolog (417 aa).

A LisH domain is found at Q7–G39. Positions T54–F86 form a coiled coil. 7 WD repeats span residues G120–T159, G162–T203, G204–T243, G246–V285, G288–V340, G343–T382, and A385–R417.

Belongs to the WD repeat LIS1/nudF family.

The protein localises to the cytoplasm. It localises to the cytoskeleton. The protein resides in the microtubule organizing center. It is found in the centrosome. Functionally, positively regulates the activity of the minus-end directed microtubule motor protein dynein. May enhance dynein-mediated microtubule sliding by targeting dynein to the microtubule plus end. Required for several dynein- and microtubule-dependent processes. The protein is Lissencephaly-1 homolog of Schistosoma mansoni (Blood fluke).